A 302-amino-acid chain; its full sequence is Gamma-gliadin (302 aa).

The N-terminal stretch at M1–A19 is a signal peptide. The segment at G27–A159 is disordered. The segment covering Q42–Q102 has biased composition (low complexity). Residues P103–P124 show a composition bias toward pro residues. Residues F125–A159 are compositionally biased toward low complexity.

Belongs to the gliadin/glutenin family.

Functionally, gliadin is the major seed storage protein in wheat. This Triticum aestivum (Wheat) protein is Gamma-gliadin.